A 190-amino-acid polypeptide reads, in one-letter code: Large ribosomal subunit protein uL10 (190 aa).

This sequence belongs to the universal ribosomal protein uL10 family. As to quaternary structure, part of the ribosomal stalk of the 50S ribosomal subunit. The N-terminus interacts with L11 and the large rRNA to form the base of the stalk. The C-terminus forms an elongated spine to which L12 dimers bind in a sequential fashion forming a multimeric L10(L12)X complex.

In terms of biological role, forms part of the ribosomal stalk, playing a central role in the interaction of the ribosome with GTP-bound translation factors. This is Large ribosomal subunit protein uL10 from Trichodesmium erythraeum (strain IMS101).